The primary structure comprises 442 residues: N-acetyl-S-alkylcysteine sulfoxide monooxygenase (442 aa).

Residues D58, T95, H145, Y149, S219, and S220 each contribute to the FMN site.

The protein belongs to the NtaA/SnaA/DszA monooxygenase family. As to quaternary structure, homodimer.

The enzyme catalyses (R)-N-acetyl-S-benzyl-L-cysteine sulfoxide + FMNH2 + O2 = N-acetyl-S-hydroxy-L-cysteine + benzaldehyde + FMN + H2O + H(+). It participates in amino-acid metabolism. Its function is as follows. Involved in a cysteine salvage pathway from S-alkylcysteine. Catalyzes the C-S bond cleavage in N-acetyl-S-benzyl-L-cysteine sulfoxide leading to N-acetyl-S-hydroxy-L-cysteine and benzaldehyde. This pathway is likely important in the catabolism of alkylated cysteine generated by proteolysis of alkylated glutathione formed in the detoxification of a wide range of electrophiles. Has much less efficient activity with N-acetyl-S-methyl-L-cysteine sulfoxide as substrate. Cannot use S-alkylated L-cysteine sulfones and ketone analogs as substrates, demonstrating that the sulfoxide is required for activity. This Bacillus subtilis (strain 168) protein is N-acetyl-S-alkylcysteine sulfoxide monooxygenase.